The primary structure comprises 156 residues: Small ribosomal subunit protein uS7c (156 aa).

The protein belongs to the universal ribosomal protein uS7 family. As to quaternary structure, part of the 30S ribosomal subunit.

It is found in the plastid. The protein localises to the chloroplast. Its function is as follows. One of the primary rRNA binding proteins, it binds directly to 16S rRNA where it nucleates assembly of the head domain of the 30S subunit. In Zamia furfuracea (Cardboard cycad), this protein is Small ribosomal subunit protein uS7c (rps7).